Consider the following 638-residue polypeptide: Zinc finger protein 143 (638 aa).

At methionine 1 the chain carries N-acetylmethionine. Lysine 213 participates in a covalent cross-link: Glycyl lysine isopeptide (Lys-Gly) (interchain with G-Cter in SUMO2). 4 consecutive C2H2-type zinc fingers follow at residues 237–261 (FRCE…ERSH), 267–291 (YQCE…VRTH), 297–321 (YRCS…IRTH), and 327–351 (FKCP…VRTH). Threonine 352 carries the post-translational modification Phosphothreonine. 3 C2H2-type zinc fingers span residues 357–381 (YYCT…VRIH), 387–411 (YVCT…HVVH), and 417–440 (YNCN…RTAH). Lysine 406 participates in a covalent cross-link: Glycyl lysine isopeptide (Lys-Gly) (interchain with G-Cter in SUMO2).

It belongs to the GLI C2H2-type zinc-finger protein family. In terms of assembly, interacts with CHD8. Forms a complex with HCFC1 and ZNF143. In terms of tissue distribution, expressed in all tissues tested, with the strongest expression in ovary.

It localises to the nucleus. Transcriptional activator. Activates the gene for selenocysteine tRNA (tRNAsec). Binds to the SPH motif of small nuclear RNA (snRNA) gene promoters. Participates in efficient U6 RNA polymerase III transcription via its interaction with CHD8. In complex with HCFC1 and ZNF143, regulates the expression of several genes, including AP2S1, ESCO2, OPHN1, RBL1, UBXN8 and ZNF32. The chain is Zinc finger protein 143 (ZNF143) from Homo sapiens (Human).